We begin with the raw amino-acid sequence, 239 residues long: Tetraspanin-9 (239 aa).

Residues 1–13 are Cytoplasmic-facing; that stretch reads MARGCLCCLKYMM. A helical membrane pass occupies residues 14 to 34; sequence FLFNLIFWLCGCGLLGVGIWL. At 35–55 the chain is on the extracellular side; it reads SVSQGNFATFSPSFPSLSAAN. The helical transmembrane segment at 56 to 76 threads the bilayer; the sequence is LVIAIGTIVMVTGFLGCLGAI. The Cytoplasmic portion of the chain corresponds to 77–85; the sequence is KENRCLLLS. Residues 86–106 form a helical membrane-spanning segment; sequence FFIVLLIILLAELILIILFFV. Over 107 to 203 the chain is Extracellular; the sequence is YMDKVNENAR…VKMWFDDNKH (97 aa). The N-linked (GlcNAc...) asparagine glycan is linked to Asn-180. The helical transmembrane segment at 204–224 threads the bilayer; that stretch reads VLGTVGMCILIMQILGMAFSM. Topologically, residues 225-239 are cytoplasmic; sequence TLFQHIHRTGKKYDA.

It belongs to the tetraspanin (TM4SF) family. As to quaternary structure, found in a complex with GP6. In terms of processing, glycosylated.

It localises to the membrane. This Sus scrofa (Pig) protein is Tetraspanin-9 (TSPAN9).